Reading from the N-terminus, the 154-residue chain is 6,7-dimethyl-8-ribityllumazine synthase (154 aa).

5-amino-6-(D-ribitylamino)uracil-binding positions include phenylalanine 22, alanine 56–glutamate 58, and alanine 80–isoleucine 82. Residue alanine 85–threonine 86 coordinates (2S)-2-hydroxy-3-oxobutyl phosphate. Histidine 88 serves as the catalytic Proton donor. Phenylalanine 113 serves as a coordination point for 5-amino-6-(D-ribitylamino)uracil. Arginine 127 lines the (2S)-2-hydroxy-3-oxobutyl phosphate pocket.

It belongs to the DMRL synthase family.

The enzyme catalyses (2S)-2-hydroxy-3-oxobutyl phosphate + 5-amino-6-(D-ribitylamino)uracil = 6,7-dimethyl-8-(1-D-ribityl)lumazine + phosphate + 2 H2O + H(+). Its pathway is cofactor biosynthesis; riboflavin biosynthesis; riboflavin from 2-hydroxy-3-oxobutyl phosphate and 5-amino-6-(D-ribitylamino)uracil: step 1/2. Catalyzes the formation of 6,7-dimethyl-8-ribityllumazine by condensation of 5-amino-6-(D-ribitylamino)uracil with 3,4-dihydroxy-2-butanone 4-phosphate. This is the penultimate step in the biosynthesis of riboflavin. This Clostridium botulinum (strain 657 / Type Ba4) protein is 6,7-dimethyl-8-ribityllumazine synthase.